A 505-amino-acid polypeptide reads, in one-letter code: Trans-cinnamate 4-monooxygenase (505 aa).

Residues 3-23 (LLLLEKTLLALFIAATIAITI) traverse the membrane as a helical segment. (E)-cinnamate is bound by residues 212–217 (RSRLAQ) and Ala305. Cys446 is a heme binding site.

The protein belongs to the cytochrome P450 family. Heme is required as a cofactor.

It is found in the membrane. It carries out the reaction (E)-cinnamate + reduced [NADPH--hemoprotein reductase] + O2 = (E)-4-coumarate + oxidized [NADPH--hemoprotein reductase] + H2O + H(+). It functions in the pathway phenylpropanoid metabolism; trans-4-coumarate biosynthesis; trans-4-coumarate from trans-cinnamate: step 1/1. Functionally, catalyzes the first oxidative step of the phenylpropanoid pathway in higher plants by transforming trans-cinnamate into p-coumarate. The compounds formed by this pathway are essential components for lignification, pollination, and defense against ultraviolet light, predators and pathogens. The protein is Trans-cinnamate 4-monooxygenase (CYP73A19) of Cicer arietinum (Chickpea).